The primary structure comprises 441 residues: Transducin-like enhancer protein 7 (441 aa).

Disordered regions lie at residues 1–77 (MSGE…QWHL) and 91–119 (PDAQ…SSSS). Residues 27–49 (ESSGVSSQPEPQVQQQLGSLLGV) are compositionally biased toward low complexity. Polar residues predominate over residues 62–76 (PADQETSTVTQQQWH). Residues 108 to 119 (GSEVGQPYSSSS) show a composition bias toward low complexity. WD repeat units lie at residues 156 to 194 (FHGK…AGEK), 204 to 243 (HPQD…QVRA), 247 to 285 (STGP…LIRK), 286 to 325 (HEVP…RLHQ), and 409 to 441 (EESS…QLLY).

This sequence belongs to the WD repeat Groucho/TLE family.

The chain is Transducin-like enhancer protein 7 from Homo sapiens (Human).